The sequence spans 311 residues: Insulin-like growth factor-binding protein 2 (311 aa).

Positions 1-36 (MALGGVGRGGAARAAWPRLLLAALAPALALAGPALP) are cleaved as a signal peptide. Positions 38–120 (VLFRCPPCTA…VQGQGTCARP (83 aa)) constitute an IGFBP N-terminal domain. Intrachain disulfides connect C42/C70, C45/C72, C53/C73, C61/C76, C84/C97, and C91/C117. 2 disordered regions span residues 112 to 168 (QGQG…PLKT) and 188 to 210 (GKVG…TGRT). One can recognise a Thyroglobulin type-1 domain in the interval 209–291 (RTPCQQELDQ…APTIRGDPEC (83 aa)). 3 disulfide bridges follow: C212/C246, C257/C268, and C270/C291. Positions 286 to 288 (RGD) match the Cell attachment site motif.

As to quaternary structure, binds IGF2 more than IGF1.

It is found in the secreted. In terms of biological role, inhibits IGF-mediated growth and developmental rates. IGF-binding proteins prolong the half-life of the IGFs and have been shown to either inhibit or stimulate the growth promoting effects of the IGFs on cell culture. They alter the interaction of IGFs with their cell surface receptors. The protein is Insulin-like growth factor-binding protein 2 (IGFBP2) of Gallus gallus (Chicken).